Reading from the N-terminus, the 112-residue chain is Protein new-glue 2 (112 aa).

Positions 1 to 24 (MKITVVLVLLATFLGCVMIHESEA) are cleaved as a signal peptide. A compositionally biased stretch (low complexity) spans 24–69 (ASTTTTSTSASATTTTSASATTTTSASATTTTSASATTTTASPSSS). Residues 24–112 (ASTTTTSTSA…RSSRNRRSEE (89 aa)) are disordered. A run of 4 repeats spans residues 31 to 38 (TSASATTT), 39 to 46 (TSASATTT), 47 to 54 (TSASATTT), and 55 to 62 (TSASATTT). Residues 31–62 (TSASATTTTSASATTTTSASATTTTSASATTT) are 4 X 8 AA tandem repeats of T-S-A-S-A-T-T-T. A compositionally biased stretch (basic residues) spans 70–112 (SKKKTVTHYKRKVKRPKKVRKITRRRGLRSRNGRSSRNRRSEE).

To NG-1, also to SGS-3. As to expression, salivary gland specific.

It localises to the secreted. The sequence is that of Protein new-glue 2 (ng2) from Drosophila melanogaster (Fruit fly).